The sequence spans 375 residues: Cyclic AMP receptor 2 (375 aa).

Topologically, residues 1–10 (MTIMSDIIAQ) are extracellular. A helical transmembrane segment spans residues 11-30 (RTILLIADFSSIIGCSLVLI). At 31 to 44 (GFWRLKLLRNHITK) the chain is on the cytoplasmic side. Residues 45–65 (IISLFCATSLFKDVISTIITL) traverse the membrane as a helical segment. Residues 66-82 (LYKPDQTESGFPCYLHA) lie on the Extracellular side of the membrane. A helical membrane pass occupies residues 83 to 108 (IVITFGSLACWLWTLMLSFSIYNLIV). The Cytoplasmic segment spans residues 109–119 (RREPEPERFEK). A helical transmembrane segment spans residues 120 to 138 (FYFCLCYGLPLISTIVMLS). Topologically, residues 139-161 (THIIQPVGGWCWIGDNYDGYRFG) are extracellular. A helical membrane pass occupies residues 162-180 (LFYGPFFFIWGTSAILVGL). At 181–204 (TSKYTYSVIRSSVSDNKDKHMTYQ) the chain is on the cytoplasmic side. Position 192 is a phosphoserine (serine 192). Residues 205–223 (FKLINYIVVFLVCWVFAIV) form a helical membrane-spanning segment. The Extracellular segment spans residues 224-234 (NRILNGLNQFP). The helical transmembrane segment at 235–259 (TVPNVLHTYFSVSHGFYASITFIYN) threads the bilayer. Over 260 to 375 (NPLMWRYFGA…NNINNKNDMI (116 aa)) the chain is Cytoplasmic. Phosphoserine is present on residues serine 298 and serine 303. The tract at residues 338-375 (PKENENQNHHHHHHHHHHHNHYNNNNNNNNINNKNDMI) is disordered. Over residues 346–358 (HHHHHHHHHHHNH) the composition is skewed to basic residues. Residues 359–375 (YNNNNNNNNINNKNDMI) are compositionally biased toward low complexity.

The protein belongs to the G-protein coupled receptor 5 family. In terms of processing, C-terminal Ser or Thr residues may be phosphorylated.

It localises to the membrane. Receptor for cAMP. Coordinates the aggregation of individual cells into a multicellular organism and regulates the expression of a large number of developmentally regulated genes. The activity of this receptor is mediated by G proteins. Plays a key role during tip formation and late development; involved in cAMP-directed patterning of pre stalk cells as they sort before and during tip formation. This chain is Cyclic AMP receptor 2 (carB), found in Dictyostelium discoideum (Social amoeba).